Reading from the N-terminus, the 913-residue chain is Auxilin (913 aa).

M1 is subject to N-acetylmethionine. 3 repeat units span residues 36–39, 40–43, and 44–47. The interval 36-47 is 3 X 4 AA approximate tandem repeats; it reads NLKDNLKDTLKD. A Phosphatase tensin-type domain is found at 55–222; it reads SVTSYTKGDL…GYMCDLLADK (168 aa). The residue at position 112 (S112) is a Phosphoserine. Residue C164 is the Phosphocysteine intermediate of the active site. The C2 tensin-type domain occupies 228–366; the sequence is FKPLTIKSIT…FQVTLDVELQ (139 aa). The SH3-binding motif lies at 409-417; the sequence is PIDIPPDNP. Residues 451 to 776 form a disordered region; that stretch reads QESEQSDDEL…GKGSSNLEGK (326 aa). 2 positions are modified to phosphoserine: S453 and S456. Positions 506–523 are enriched in polar residues; that stretch reads AMSNSFSPPAAPPTNSEL. Low complexity predominate over residues 554–572; it reads ASTQSTPRRSATSTSASPT. A phosphoserine mark is found at S563 and S570. Residues 599–629 are compositionally biased toward polar residues; the sequence is FLNTSSASSDPFLQPTRSPSPTVHASSTPAV. The segment covering 654–669 has biased composition (low complexity); it reads SAATSPTGSSHGTPTH. The 65-residue stretch at 849-913 folds into the J domain; that stretch reads TKWKPVGMAD…FENQGQKPLY (65 aa).

In terms of assembly, forms a complex composed of HSPA8, CLTC and DNAJC6. Interacts with HSPA8/HSC70 in an ATP-dependent manner; this interaction stimulates the HSPA8's ATPase activity. Interacts with CLTC; this interaction produces a local change in heavy-chain contacts, creating a detectable global distortion of the clathrin coat. Interacts with AP2A2. Interacts with DNM1(GTP-bound form); this interaction allows clathrin-coated vesicle (CCV) formation at the plasma membrane. Post-translationally, phosphorylation at Ser-570 modulates its ability to bind CLTC and therefore the synaptic vesicle endocytosis (SVE). The N-terminus is blocked. Expressed in various brain regions, including cerebellum, corpus callosum, cortex, striatum, brainstem, pons, putamen, spinal cord and substantia nigra. Very low expression in non-neural tissues such as leukocytes, liver, adipose tissue, skeletal muscle and bone marrow.

The protein resides in the cytoplasmic vesicle. Its subcellular location is the clathrin-coated vesicle. May act as a protein phosphatase and/or a lipid phosphatase. Co-chaperone that recruits HSPA8/HSC70 to clathrin-coated vesicles (CCVs) and promotes the ATP-dependent dissociation of clathrin from CCVs and participates in clathrin-mediated endocytosis of synaptic vesicles and their recycling and also in intracellular trafficking. Firstly, binds tightly to the clathrin cages, at a ratio of one DNAJC6 per clathrin triskelion. The HSPA8:ATP complex then binds to the clathrin-auxilin cage, initially at a ratio of one HSPA8 per triskelion leading to ATP hydrolysis stimulation and causing a conformational change in the HSPA8. This cycle is repeated three times to drive to a complex containing the clathrin-auxilin cage associated to three HSPA8:ADP complex. The ATP hydrolysis of the third HSPA8:ATP complex leads to a concerted dismantling of the cage into component triskelia. Then, dissociates from the released triskelia and be recycled to initiate another cycle of HSPA8's recruitment. Also acts during the early steps of clathrin-coated vesicle (CCV) formation through its interaction with the GTP bound form of DNM1. The protein is Auxilin of Homo sapiens (Human).